Reading from the N-terminus, the 224-residue chain is Response regulator protein GraR (224 aa).

The Response regulatory domain occupies 2 to 115; sequence QILLVEDDNT…VLIAKLQAIY (114 aa). At Asp-51 the chain carries 4-aspartylphosphate. Positions 126–224 form a DNA-binding region, ompR/PhoB-type; it reads KRTLTWQDAV…KVGKGYMAHE (99 aa). A phosphothreonine mark is found at Thr-128, Thr-130, and Thr-149.

As to quaternary structure, interacts with GraX. In terms of processing, phosphorylated by GraS. Phosphorylated by Stk1; phosphorylation increases the DNA-binding activity of GraR.

Its subcellular location is the cytoplasm. Member of the two-component regulatory system GraR/GraS involved in resistance against cationic antimicrobial peptides (CAMPs). Upon phosphorylation by GraS, functions as a transcription regulator by direct binding to promoter regions of target genes such as adhesins, exoproteins, transporters, toxins, and proteins involved in cell wall synthesis. Down-regulates the expression of many genes involved in RNA and amino acid synthesis or glycolysis. This is Response regulator protein GraR (graR) from Staphylococcus aureus (strain USA300).